A 421-amino-acid chain; its full sequence is Gamma-glutamyl phosphate reductase (421 aa).

This sequence belongs to the gamma-glutamyl phosphate reductase family.

The protein resides in the cytoplasm. It carries out the reaction L-glutamate 5-semialdehyde + phosphate + NADP(+) = L-glutamyl 5-phosphate + NADPH + H(+). It functions in the pathway amino-acid biosynthesis; L-proline biosynthesis; L-glutamate 5-semialdehyde from L-glutamate: step 2/2. Functionally, catalyzes the NADPH-dependent reduction of L-glutamate 5-phosphate into L-glutamate 5-semialdehyde and phosphate. The product spontaneously undergoes cyclization to form 1-pyrroline-5-carboxylate. This Ruegeria sp. (strain TM1040) (Silicibacter sp.) protein is Gamma-glutamyl phosphate reductase.